The chain runs to 207 residues: Oligoribonuclease (207 aa).

Positions 8–172 (LVWIDCEMTG…ADILESVREL (165 aa)) constitute an Exonuclease domain. Residue Y129 is part of the active site.

The protein belongs to the oligoribonuclease family.

It is found in the cytoplasm. In terms of biological role, 3'-to-5' exoribonuclease specific for small oligoribonucleotides. The sequence is that of Oligoribonuclease from Leifsonia xyli subsp. xyli (strain CTCB07).